Reading from the N-terminus, the 1385-residue chain is DNA-directed RNA polymerase subunit beta' (1385 aa).

Positions 72, 74, 87, and 90 each coordinate Zn(2+). 3 residues coordinate Mg(2+): Asp-467, Asp-469, and Asp-471. Positions 829, 910, 917, and 920 each coordinate Zn(2+).

The protein belongs to the RNA polymerase beta' chain family. The RNAP catalytic core consists of 2 alpha, 1 beta, 1 beta' and 1 omega subunit. When a sigma factor is associated with the core the holoenzyme is formed, which can initiate transcription. It depends on Mg(2+) as a cofactor. Zn(2+) is required as a cofactor.

The enzyme catalyses RNA(n) + a ribonucleoside 5'-triphosphate = RNA(n+1) + diphosphate. DNA-dependent RNA polymerase catalyzes the transcription of DNA into RNA using the four ribonucleoside triphosphates as substrates. In Elusimicrobium minutum (strain Pei191), this protein is DNA-directed RNA polymerase subunit beta'.